Consider the following 476-residue polypeptide: Casein kinase 1-like protein 7 (476 aa).

The 270-residue stretch at 9 to 278 folds into the Protein kinase domain; sequence FKLGKKIGSG…LKRLFRDLFI (270 aa). ATP contacts are provided by residues 15 to 23 and Lys38; that span reads IGSGSFGEL. Asp128 serves as the catalytic Proton acceptor. 2 disordered regions span residues 299-324 and 340-464; these read GSSSGSSSRTRHHTTAKPGFNADPIE and PGAV…TRED. Basic and acidic residues predominate over residues 357–367; it reads PRDRSRSRNSD. Positions 382-422 are enriched in low complexity; that stretch reads ANSSSRYRASSSRKAVAASSSRPSSAGGPSESRTSSRLVSS. Residues 423–432 show a composition bias toward gly residues; sequence SGGGGSGSGN.

The protein belongs to the protein kinase superfamily. CK1 Ser/Thr protein kinase family. Casein kinase I subfamily. Monomer. Post-translationally, autophosphorylated.

It localises to the cytoplasm. It carries out the reaction L-seryl-[protein] + ATP = O-phospho-L-seryl-[protein] + ADP + H(+). The catalysed reaction is L-threonyl-[protein] + ATP = O-phospho-L-threonyl-[protein] + ADP + H(+). Casein kinases are operationally defined by their preferential utilization of acidic proteins such as caseins as substrates. It can phosphorylate a large number of proteins. The protein is Casein kinase 1-like protein 7 of Arabidopsis thaliana (Mouse-ear cress).